Reading from the N-terminus, the 557-residue chain is Formate--tetrahydrofolate ligase (557 aa).

66–73 (TPAGEGKT) provides a ligand contact to ATP.

Belongs to the formate--tetrahydrofolate ligase family.

It carries out the reaction (6S)-5,6,7,8-tetrahydrofolate + formate + ATP = (6R)-10-formyltetrahydrofolate + ADP + phosphate. It participates in one-carbon metabolism; tetrahydrofolate interconversion. This is Formate--tetrahydrofolate ligase from Bartonella tribocorum (strain CIP 105476 / IBS 506).